We begin with the raw amino-acid sequence, 137 residues long: Proofreading thioesterase EntH (137 aa).

Residue E63 is the Nucleophile or proton acceptor of the active site.

This sequence belongs to the thioesterase PaaI family. As to quaternary structure, homotetramer. Dimer of dimers. Interacts specifically with the aryl carrier protein (ArCP) domain of EntB.

The protein localises to the cytoplasm. Its pathway is siderophore biosynthesis; enterobactin biosynthesis. Required for optimal enterobactin synthesis. Acts as a proofreading enzyme that prevents EntB misacylation by hydrolyzing the thioester bound existing between EntB and wrongly charged molecules. The chain is Proofreading thioesterase EntH (entH) from Klebsiella pneumoniae subsp. pneumoniae (strain ATCC 700721 / MGH 78578).